A 162-amino-acid polypeptide reads, in one-letter code: Shikimate kinase (162 aa).

Residue 11–16 (GSGKSS) coordinates ATP. Residue Ser15 coordinates Mg(2+). Residues Asp33, Arg57, and Gly80 each contribute to the substrate site. Arg116 contacts ATP. Arg132 is a substrate binding site.

This sequence belongs to the shikimate kinase family. In terms of assembly, monomer. It depends on Mg(2+) as a cofactor.

The protein resides in the cytoplasm. It carries out the reaction shikimate + ATP = 3-phosphoshikimate + ADP + H(+). It participates in metabolic intermediate biosynthesis; chorismate biosynthesis; chorismate from D-erythrose 4-phosphate and phosphoenolpyruvate: step 5/7. Functionally, catalyzes the specific phosphorylation of the 3-hydroxyl group of shikimic acid using ATP as a cosubstrate. The polypeptide is Shikimate kinase (Helicobacter acinonychis (strain Sheeba)).